Reading from the N-terminus, the 118-residue chain is Large ribosomal subunit protein bL17 (118 aa).

This sequence belongs to the bacterial ribosomal protein bL17 family. As to quaternary structure, part of the 50S ribosomal subunit. Contacts protein L32.

This Aster yellows witches'-broom phytoplasma (strain AYWB) protein is Large ribosomal subunit protein bL17.